Consider the following 502-residue polypeptide: Lipoyl synthase, apicoplast (502 aa).

Positions 1–16 (MNFLVLFFSYSIFVLP) are cleaved as a signal peptide. [4Fe-4S] cluster-binding residues include C192, C197, C203, C218, C222, C225, and S433. In terms of domain architecture, Radical SAM core spans 204–422 (WNIGTATIML…KDVGLKMGFK (219 aa)).

It belongs to the radical SAM superfamily. Lipoyl synthase family. The cofactor is [4Fe-4S] cluster.

It localises to the plastid. Its subcellular location is the apicoplast. The catalysed reaction is [[Fe-S] cluster scaffold protein carrying a second [4Fe-4S](2+) cluster] + N(6)-octanoyl-L-lysyl-[protein] + 2 oxidized [2Fe-2S]-[ferredoxin] + 2 S-adenosyl-L-methionine + 4 H(+) = [[Fe-S] cluster scaffold protein] + N(6)-[(R)-dihydrolipoyl]-L-lysyl-[protein] + 4 Fe(3+) + 2 hydrogen sulfide + 2 5'-deoxyadenosine + 2 L-methionine + 2 reduced [2Fe-2S]-[ferredoxin]. Its pathway is protein modification; protein lipoylation via endogenous pathway; protein N(6)-(lipoyl)lysine from octanoyl-[acyl-carrier-protein]: step 2/2. Its function is as follows. Catalyzes the radical-mediated insertion of two sulfur atoms into the C-6 and C-8 positions of the octanoyl moiety bound to the lipoyl domains of lipoate-dependent enzymes, thereby converting the octanoylated domains into lipoylated derivatives. In Plasmodium yoelii yoelii, this protein is Lipoyl synthase, apicoplast.